A 491-amino-acid polypeptide reads, in one-letter code: Ribosome biogenesis protein YTM1 (491 aa).

Residues Ile8 to Arg103 form a ubiquitin-like (UBL) domain region. Residues Ser113–Lys491 are sufficient for interaction with ERB1 and association with 66S pre-ribosomes. WD repeat units lie at residues Arg128–Tyr167, Gly169–Gln207, Gly241–Ile280, Gly318–Thr358, Thr360–Asn399, Gly409–Thr449, and Ser456–Lys491. Residues Val205–Glu228 form a disordered region. Residues Gln207–Asn225 are compositionally biased toward acidic residues.

It belongs to the WD repeat WDR12/YTM1 family. In terms of assembly, component of the NOP7 complex, composed of ERB1, NOP7 and YTM1. The complex is held together by ERB1, which interacts with NOP7 via its N-terminal domain and with YTM1 via a high-affinity interaction between the seven-bladed beta-propeller domains of the 2 proteins. The NOP7 complex associates with the 66S pre-ribosome. Interacts (via UBL domain) with MDN1 (via VWFA/MIDAS domain).

It is found in the nucleus. The protein localises to the nucleolus. It localises to the nucleoplasm. Component of the NOP7 complex, which is required for maturation of the 25S and 5.8S ribosomal RNAs and formation of the 60S ribosome. In Lodderomyces elongisporus (strain ATCC 11503 / CBS 2605 / JCM 1781 / NBRC 1676 / NRRL YB-4239) (Yeast), this protein is Ribosome biogenesis protein YTM1.